Here is a 325-residue protein sequence, read N- to C-terminus: Glyoxylate/hydroxypyruvate reductase B (325 aa).

Residues Arg-237 and Glu-266 contribute to the active site. The Proton donor role is filled by His-285.

It belongs to the D-isomer specific 2-hydroxyacid dehydrogenase family. GhrB subfamily. As to quaternary structure, homodimer.

The protein resides in the cytoplasm. The enzyme catalyses glycolate + NADP(+) = glyoxylate + NADPH + H(+). It carries out the reaction (R)-glycerate + NAD(+) = 3-hydroxypyruvate + NADH + H(+). It catalyses the reaction (R)-glycerate + NADP(+) = 3-hydroxypyruvate + NADPH + H(+). Functionally, catalyzes the NADPH-dependent reduction of glyoxylate and hydroxypyruvate into glycolate and glycerate, respectively. This is Glyoxylate/hydroxypyruvate reductase B from Serratia proteamaculans (strain 568).